Consider the following 902-residue polypeptide: Alanine--tRNA ligase (902 aa).

The Zn(2+) site is built by His-567, His-571, Cys-671, and His-675.

This sequence belongs to the class-II aminoacyl-tRNA synthetase family. Zn(2+) serves as cofactor.

It localises to the cytoplasm. The enzyme catalyses tRNA(Ala) + L-alanine + ATP = L-alanyl-tRNA(Ala) + AMP + diphosphate. Catalyzes the attachment of alanine to tRNA(Ala) in a two-step reaction: alanine is first activated by ATP to form Ala-AMP and then transferred to the acceptor end of tRNA(Ala). Also edits incorrectly charged Ser-tRNA(Ala) and Gly-tRNA(Ala) via its editing domain. The chain is Alanine--tRNA ligase from Mycoplasmoides gallisepticum (strain R(low / passage 15 / clone 2)) (Mycoplasma gallisepticum).